The following is a 291-amino-acid chain: Probable aquaporin PIP2-4 (291 aa).

Residue M1 is modified to N-acetylmethionine. The disordered stretch occupies residues 1–22 (MAKDLDVNESGPPAARDYKDPP). A2 carries the post-translational modification N-acetylalanine; in Probable aquaporin PIP2-4, N-terminally processed. The Cytoplasmic segment spans residues 2 to 39 (AKDLDVNESGPPAARDYKDPPPAPFFDMEELRKWPLYR). K3 carries the post-translational modification N6,N6-dimethyllysine. Residues 40-60 (AVIAEFVATLLFLYVSILTVI) form a helical membrane-spanning segment. At 61 to 74 (GYKAQTDATAGGVD) the chain is on the extracellular side. Residues 75–95 (CGGVGILGIAWAFGGMIFVLV) form a helical membrane-spanning segment. Residues 96–125 (YCTAGISGGHINPAVTVGLFLARKVSLVRT) lie on the Cytoplasmic side of the membrane. Residues 107 to 109 (NPA) carry the NPA 1 motif. Residues 126-146 (VLYIVAQCLGAICGCGFVKAF) traverse the membrane as a helical segment. At 147-167 (QSSYYTRYGGGANELADGYNK) the chain is on the extracellular side. Residues 168–188 (GTGLGAEIIGTFVLVYTVFSA) form a helical membrane-spanning segment. At 189–201 (TDPKRNARDSHVP) the chain is on the cytoplasmic side. The chain crosses the membrane as a helical span at residues 202–222 (VLAPLPIGFAVFMVHLATIPI). The Extracellular portion of the chain corresponds to 223–249 (TGTGINPARSFGAAVIYNNEKAWDDQW). Positions 228 to 230 (NPA) match the NPA 2 motif. The helical transmembrane segment at 250–270 (IFWVGPMIGAAAAAFYHQFIL) threads the bilayer. At 271–291 (RAAAIKALGSFGSFGSFRSFA) the chain is on the cytoplasmic side. Residues S283, S286, and S289 each carry the phosphoserine modification.

Belongs to the MIP/aquaporin (TC 1.A.8) family. PIP (TC 1.A.8.11) subfamily. Expressed in roots.

It localises to the cell membrane. In terms of biological role, aquaporins facilitate the transport of water and small neutral solutes across cell membranes. This chain is Probable aquaporin PIP2-4 (PIP2-4), found in Arabidopsis thaliana (Mouse-ear cress).